The chain runs to 176 residues: Vitamin K epoxide reductase complex subunit 1-like protein 1 (176 aa).

Topologically, residues 1–13 (MAAPVLLRVSVPR) are cytoplasmic. A helical transmembrane segment spans residues 14–36 (WERVARYAVCAAGILLSIYAYHV). Residues 37–87 (EREKERDPEHRALCDLGPWVKCSAALASRWGRGFGLLGSIFGKDGVLNQPN) lie on the Lumenal side of the membrane. An intrachain disulfide couples C50 to C58. Residue N87 participates in (S)-warfarin binding. Residues 88–102 (SVFGLIFYILQLLLG) form a helical membrane-spanning segment. At 103–107 (MTASA) the chain is on the cytoplasmic side. A helical transmembrane segment spans residues 108 to 135 (VAALILMTSSIMSVVGSLYLAYILYFVL). Topologically, residues 136 to 138 (KEF) are lumenal. C139 and C142 are oxidised to a cystine. The chain crosses the membrane as a helical span at residues 139-160 (CIICIVTYVLNFLLLIINYKRL). Positions 142 and 146 each coordinate phylloquinone. Residue Y146 participates in (S)-warfarin binding. Topologically, residues 161-176 (VYLNEAWKRQLQPKQD) are cytoplasmic.

This sequence belongs to the VKOR family.

Its subcellular location is the endoplasmic reticulum membrane. It carries out the reaction phylloquinone + [protein]-disulfide + H2O = 2,3-epoxyphylloquinone + [protein]-dithiol. It catalyses the reaction phylloquinol + [protein]-disulfide = phylloquinone + [protein]-dithiol. Its activity is regulated as follows. Inhibited by warfarin (coumadin). Warfarin locks VKORC1 in both redox states into the closed conformation. In terms of biological role, involved in vitamin K metabolism. Can reduce inactive vitamin K 2,3-epoxide to active vitamin K, and may contribute to vitamin K-mediated protection against oxidative stress. Plays a role in vitamin K-dependent gamma-carboxylation of Glu residues in target proteins. The sequence is that of Vitamin K epoxide reductase complex subunit 1-like protein 1 (VKORC1L1) from Homo sapiens (Human).